The chain runs to 354 residues: Protein-arginine kinase (354 aa).

A Phosphagen kinase C-terminal domain is found at 24-254 (IVLSSRIRLA…QQIIHQEKTA (231 aa)). ATP-binding positions include 27–31 (SSRIR), His-92, Arg-125, 176–180 (RASVM), and 207–212 (RGIYGE). The RDXXRA motif of the pArg binding pocket involved in allosteric regulation signature appears at 337–342 (RDYRRA).

It belongs to the ATP:guanido phosphotransferase family.

It catalyses the reaction L-arginyl-[protein] + ATP = N(omega)-phospho-L-arginyl-[protein] + ADP + H(+). With respect to regulation, appears to be allosterically activated by the binding of pArg-containing polypeptides to the pArg-binding pocket localized in the C-terminal domain of McsB. Functionally, catalyzes the specific phosphorylation of arginine residues in a large number of proteins. Is part of the bacterial stress response system. Protein arginine phosphorylation has a physiologically important role and is involved in the regulation of many critical cellular processes, such as protein homeostasis, motility, competence, and stringent and stress responses, by regulating gene expression and protein activity. This chain is Protein-arginine kinase, found in Bacillus mycoides (strain KBAB4) (Bacillus weihenstephanensis).